A 193-amino-acid chain; its full sequence is Large ribosomal subunit protein uL18 (193 aa).

It belongs to the universal ribosomal protein uL18 family. As to quaternary structure, part of the 50S ribosomal subunit. Contacts the 5S and 23S rRNAs.

This is one of the proteins that bind and probably mediate the attachment of the 5S RNA into the large ribosomal subunit, where it forms part of the central protuberance. This chain is Large ribosomal subunit protein uL18, found in Methanococcus vannielii (strain ATCC 35089 / DSM 1224 / JCM 13029 / OCM 148 / SB).